The primary structure comprises 213 residues: Imidazole glycerol phosphate synthase subunit HisH (213 aa).

In terms of domain architecture, Glutamine amidotransferase type-1 spans 4–211; the sequence is NIGLIDYGMG…LAWLKKETKD (208 aa). The Nucleophile role is filled by Cys82. Residues His186 and Glu188 contribute to the active site.

Heterodimer of HisH and HisF.

It localises to the cytoplasm. It carries out the reaction 5-[(5-phospho-1-deoxy-D-ribulos-1-ylimino)methylamino]-1-(5-phospho-beta-D-ribosyl)imidazole-4-carboxamide + L-glutamine = D-erythro-1-(imidazol-4-yl)glycerol 3-phosphate + 5-amino-1-(5-phospho-beta-D-ribosyl)imidazole-4-carboxamide + L-glutamate + H(+). It catalyses the reaction L-glutamine + H2O = L-glutamate + NH4(+). The protein operates within amino-acid biosynthesis; L-histidine biosynthesis; L-histidine from 5-phospho-alpha-D-ribose 1-diphosphate: step 5/9. Its function is as follows. IGPS catalyzes the conversion of PRFAR and glutamine to IGP, AICAR and glutamate. The HisH subunit catalyzes the hydrolysis of glutamine to glutamate and ammonia as part of the synthesis of IGP and AICAR. The resulting ammonia molecule is channeled to the active site of HisF. This Prochlorococcus marinus (strain SARG / CCMP1375 / SS120) protein is Imidazole glycerol phosphate synthase subunit HisH.